The sequence spans 617 residues: MNTENRSPEQFDIPLFLKNLPKLPGVYRFFDEGGKVLYVGKAVNLKRRVSGYFQKNDHSPRIALMVKQVHHIETTITRSEAEALILENNFIKALSPKYNILFRDDKSYPYLMLSGHQYPQMAYYRGTLKKPNQYFGPYPNSNAVRDSIQILQKVFMLRTCEDSVFEHRDRPCLLYQIKRCTAPCVGHISEEDYRDSVRQAATFLNGKTDELTRTLQHKMQTAAANLQFEEAARYRDQIQALGIMQSNQFIDSKNPNNPNDIDLLALAVSDGLVCVHWVSIRGGRHVGDKSFFPDTKNDPEPNGQDYAEAFVAQHYLGKSKPDIIINNFPVPDALKEALEGEHGKQMQFVTKTIGERKVWLKMAEQNAQMAIAQRRLQQSNQQHRIDELAKILGMDSDGLNRLECFDISHTQGEATIASCVVYDEQNIQPSQYRRYNITTAKPGDDYAAMREVLTRRYGKMQEAEANGETVKWPDAVLIDGGKGQIGIAVSVWEELGLHIPLVGIAKGPERKAGMEELILPFTGEVFRLPPNSPALHLLQTVRDESHRFAITGHRKKRDKARVTSSLSDIPGVGSKRRQALLTRFGGLRGVIAASREDLEKVEGISKALAETIYEHLH.

The 79-residue stretch at 22–100 folds into the GIY-YIG domain; sequence KLPGVYRFFD…IKALSPKYNI (79 aa). The 36-residue stretch at 209 to 244 folds into the UVR domain; that stretch reads DELTRTLQHKMQTAAANLQFEEAARYRDQIQALGIM.

The protein belongs to the UvrC family. As to quaternary structure, interacts with UvrB in an incision complex.

The protein localises to the cytoplasm. In terms of biological role, the UvrABC repair system catalyzes the recognition and processing of DNA lesions. UvrC both incises the 5' and 3' sides of the lesion. The N-terminal half is responsible for the 3' incision and the C-terminal half is responsible for the 5' incision. The polypeptide is UvrABC system protein C (Neisseria meningitidis serogroup A / serotype 4A (strain DSM 15465 / Z2491)).